A 324-amino-acid chain; its full sequence is Beta-ketoacyl-[acyl-carrier-protein] synthase III (324 aa).

Active-site residues include Cys114 and His251. The interval 252-256 (QANQR) is ACP-binding. Asn281 is a catalytic residue.

It belongs to the thiolase-like superfamily. FabH family. In terms of assembly, homodimer.

The protein resides in the cytoplasm. The catalysed reaction is malonyl-[ACP] + acetyl-CoA + H(+) = 3-oxobutanoyl-[ACP] + CO2 + CoA. It functions in the pathway lipid metabolism; fatty acid biosynthesis. Catalyzes the condensation reaction of fatty acid synthesis by the addition to an acyl acceptor of two carbons from malonyl-ACP. Catalyzes the first condensation reaction which initiates fatty acid synthesis and may therefore play a role in governing the total rate of fatty acid production. Possesses both acetoacetyl-ACP synthase and acetyl transacylase activities. Its substrate specificity determines the biosynthesis of branched-chain and/or straight-chain of fatty acids. This is Beta-ketoacyl-[acyl-carrier-protein] synthase III from Rhodospirillum rubrum (strain ATCC 11170 / ATH 1.1.1 / DSM 467 / LMG 4362 / NCIMB 8255 / S1).